The primary structure comprises 519 residues: Probable cytosol aminopeptidase (519 aa).

Mn(2+) is bound by residues Lys283 and Asp288. Residue Lys295 is part of the active site. 3 residues coordinate Mn(2+): Asp306, Asp365, and Glu367. The active site involves Arg369.

The protein belongs to the peptidase M17 family. The cofactor is Mn(2+).

The protein localises to the cytoplasm. It catalyses the reaction Release of an N-terminal amino acid, Xaa-|-Yaa-, in which Xaa is preferably Leu, but may be other amino acids including Pro although not Arg or Lys, and Yaa may be Pro. Amino acid amides and methyl esters are also readily hydrolyzed, but rates on arylamides are exceedingly low.. The catalysed reaction is Release of an N-terminal amino acid, preferentially leucine, but not glutamic or aspartic acids.. In terms of biological role, presumably involved in the processing and regular turnover of intracellular proteins. Catalyzes the removal of unsubstituted N-terminal amino acids from various peptides. This Mycobacterium marinum (strain ATCC BAA-535 / M) protein is Probable cytosol aminopeptidase.